A 447-amino-acid chain; its full sequence is Exodeoxyribonuclease 7 large subunit (447 aa).

It belongs to the XseA family. In terms of assembly, heterooligomer composed of large and small subunits.

The protein localises to the cytoplasm. The enzyme catalyses Exonucleolytic cleavage in either 5'- to 3'- or 3'- to 5'-direction to yield nucleoside 5'-phosphates.. Functionally, bidirectionally degrades single-stranded DNA into large acid-insoluble oligonucleotides, which are then degraded further into small acid-soluble oligonucleotides. The polypeptide is Exodeoxyribonuclease 7 large subunit (Pediococcus pentosaceus (strain ATCC 25745 / CCUG 21536 / LMG 10740 / 183-1w)).